A 704-amino-acid polypeptide reads, in one-letter code: MPRNTALEKYRNIGICAHVDAGKTTTTERILFYTGLSHKIGEVHDGAATMDWMEQEQERGITITSAATTTFWSGMDQQFEKHRINIIDTPGHVDFTIEVERSLRVLDGAVVVFCGSSGVEPQSETVWRQANKYGVPRIVFVNKMDRSGADFERVCAQIKTRLKANVVPVQLNIGAEEDFKGVIDLIRMKAIMWNEEDMGLTYELVDIPADLQDRAEELRMEMIEAAAEASEELMEKYLEGGELSEDEIHQGLRARVLNNEIVLAFCGSAFKNKGVQAVLDGVVRYLPAPNQVPAIKCETEDGEPASRPSSDDAPFAALAFKLATDPFVGNLTFIRVYSGVLKSGDAVYNPVKGKKERVGRIVQMHANKRDEIKEVRAGDIAACIGLKDVTTGDTLCDQEDVVILEKMDFPEPVISVAVEPKSKADQEKMSIALGKLAAEDPSFRVKTDEESGQTIISGMGELHLDIIVDRMRREFKVEANVGNPQVAYRETIRSKVEQEAKFVRQSGGRGQYGHVFVRFEPLDEVDENGEAKVFKFVDEVVGGVVPKEYIGSVAKGIEEQLNNGVLAGYPMIGVKATLYDGSYHDVDSSEMAFKIAGSMALKEGAKKANACILEPIMKVEVVTPEDYLGDVMGDLNRRRGIIEGMDENPSGRVINALVPLAEMFGYATNVRSISQGRASFSMEFKKYAEVPNNIADEIIKSRNS.

The region spanning 8–290 is the tr-type G domain; it reads EKYRNIGICA…GVVRYLPAPN (283 aa). GTP-binding positions include 17-24, 88-92, and 142-145; these read AHVDAGKT, DTPGH, and NKMD.

Belongs to the TRAFAC class translation factor GTPase superfamily. Classic translation factor GTPase family. EF-G/EF-2 subfamily.

Its subcellular location is the cytoplasm. Its function is as follows. Catalyzes the GTP-dependent ribosomal translocation step during translation elongation. During this step, the ribosome changes from the pre-translocational (PRE) to the post-translocational (POST) state as the newly formed A-site-bound peptidyl-tRNA and P-site-bound deacylated tRNA move to the P and E sites, respectively. Catalyzes the coordinated movement of the two tRNA molecules, the mRNA and conformational changes in the ribosome. This is Elongation factor G from Francisella tularensis subsp. holarctica (strain LVS).